Reading from the N-terminus, the 703-residue chain is Polyribonucleotide nucleotidyltransferase (703 aa).

Positions 486 and 492 each coordinate Mg(2+). One can recognise a KH domain in the interval 553–614 (PRITTIWIKP…AACDAAIQMI (62 aa)). Residues 624–692 (GKLYMGTVKK…KQGKIKLSRK (69 aa)) enclose the S1 motif domain.

It belongs to the polyribonucleotide nucleotidyltransferase family. Requires Mg(2+) as cofactor.

Its subcellular location is the cytoplasm. It carries out the reaction RNA(n+1) + phosphate = RNA(n) + a ribonucleoside 5'-diphosphate. In terms of biological role, involved in mRNA degradation. Catalyzes the phosphorolysis of single-stranded polyribonucleotides processively in the 3'- to 5'-direction. This is Polyribonucleotide nucleotidyltransferase from Trichlorobacter lovleyi (strain ATCC BAA-1151 / DSM 17278 / SZ) (Geobacter lovleyi).